A 765-amino-acid chain; its full sequence is Glucosamine inositolphosphorylceramide transferase 1 (765 aa).

3 helical membrane-spanning segments follow: residues 43 to 63 (FFAS…WFVF), 394 to 414 (VILG…LGFL), and 476 to 496 (MGKF…CVGV). Residues Asn553, 577-582 (NSLNNR), 598-600 (DDD), Arg628, and 683-687 (FNCED) each bind substrate. Asp600 contacts Mn(2+). A disulfide bridge links Cys685 with Cys738. Asp687 is an active-site residue.

Belongs to the glycosyltransferase 64 family. Requires Mn(2+) as cofactor. In terms of tissue distribution, specifically and highly expressed in developing embryos and mature seeds. Also detected at low levels in stigma and pollen.

Its subcellular location is the membrane. It catalyses the reaction an N-(2R-hydroxy-very-long-chain fatty acyl)-(R)-4-hydroxysphingoid base + a 1,2-diacyl-sn-glycero-3-phospho-(1D-myo-inositol) = a 1D-myo-inositol-1-phospho-N-[(R)-2-hydroxy-very-long-chain fatty acyl]-(R)-4-hydroxysphingoid base + a 1,2-diacyl-sn-glycerol. It functions in the pathway sphingolipid metabolism. Functionally, glycosyltransferase that mediates the glycosylation of glycosylinositol phosphorylceramides (GIPCs), the major sphingolipids in the plasma membrane; acts as a HexN(Ac)-specific GIPC sugar transferase and accepts glucosamine (GlcN) and N-acetylglucosamine (GlcNAc) as the sugar unit. Responsible for the glycosylation of a subgroup of GIPCs found in seeds and pollen that contain GlcNAc and GlcN (GlcN(Ac)). Maybe involved in the maintenance of cell-cell adhesion. This is Glucosamine inositolphosphorylceramide transferase 1 from Arabidopsis thaliana (Mouse-ear cress).